The chain runs to 242 residues: Glucosamine-6-phosphate deaminase (242 aa).

The active-site Proton acceptor; for enolization step is Asp67. The For ring-opening step role is filled by Asn137. His139 (proton acceptor; for ring-opening step) is an active-site residue. The active-site For ring-opening step is the Glu144.

Belongs to the glucosamine/galactosamine-6-phosphate isomerase family. NagB subfamily.

The catalysed reaction is alpha-D-glucosamine 6-phosphate + H2O = beta-D-fructose 6-phosphate + NH4(+). Its pathway is amino-sugar metabolism; N-acetylneuraminate degradation; D-fructose 6-phosphate from N-acetylneuraminate: step 5/5. In terms of biological role, catalyzes the reversible isomerization-deamination of glucosamine 6-phosphate (GlcN6P) to form fructose 6-phosphate (Fru6P) and ammonium ion. The sequence is that of Glucosamine-6-phosphate deaminase from Staphylococcus haemolyticus (strain JCSC1435).